We begin with the raw amino-acid sequence, 392 residues long: Pectate lyase 3 (392 aa).

The first 25 residues, 1-25 (MGIKHCCYILYFTLALVTLLQPVRS), serve as a signal peptide directing secretion. The N-linked (GlcNAc...) asparagine glycan is linked to N37. A disulfide bridge links C54 with C71. Ca(2+)-binding residues include D194, D218, and D222. R270 is an active-site residue.

This sequence belongs to the polysaccharide lyase 1 family. Amb a subfamily. In terms of assembly, monomer. It depends on Ca(2+) as a cofactor. Post-translationally, the N-terminus is blocked. As to expression, pollen and flowers.

It carries out the reaction Eliminative cleavage of (1-&gt;4)-alpha-D-galacturonan to give oligosaccharides with 4-deoxy-alpha-D-galact-4-enuronosyl groups at their non-reducing ends.. Its pathway is glycan metabolism; pectin degradation; 2-dehydro-3-deoxy-D-gluconate from pectin: step 2/5. Has pectate lyase activity. In Ambrosia artemisiifolia (Common ragweed), this protein is Pectate lyase 3.